Reading from the N-terminus, the 268-residue chain is Purine nucleoside phosphorylase (268 aa).

Phosphate is bound by residues serine 36, histidine 68, 88-90 (RIH), and alanine 120. Glutamate 189 serves as a coordination point for a purine D-ribonucleoside. Serine 208 contributes to the phosphate binding site. Asparagine 231 contributes to the a purine D-ribonucleoside binding site.

Belongs to the PNP/MTAP phosphorylase family. In terms of assembly, homotrimer.

The catalysed reaction is a purine 2'-deoxy-D-ribonucleoside + phosphate = a purine nucleobase + 2-deoxy-alpha-D-ribose 1-phosphate. It participates in purine metabolism; purine nucleoside salvage. Its function is as follows. The purine nucleoside phosphorylases catalyze the phosphorolytic breakdown of the N-glycosidic bond in the beta-(deoxy)ribonucleoside molecules, with the formation of the corresponding free purine bases and pentose-1-phosphate. Cleaves guanosine, inosine, 2'-deoxyguanosine and 2'-deoxyinosine. In Mycobacterium bovis (strain ATCC BAA-935 / AF2122/97), this protein is Purine nucleoside phosphorylase (punA).